We begin with the raw amino-acid sequence, 144 residues long: Large ribosomal subunit protein uL15 (144 aa).

Residues 1–44 (MKLNELMPSEGSRTNRKRIGRGTSSGTGKTAGRGQKGQKARGKV) are disordered. A compositionally biased stretch (gly residues) spans 23–35 (TSSGTGKTAGRGQ).

This sequence belongs to the universal ribosomal protein uL15 family. In terms of assembly, part of the 50S ribosomal subunit.

Binds to the 23S rRNA. This chain is Large ribosomal subunit protein uL15, found in Pediococcus pentosaceus (strain ATCC 25745 / CCUG 21536 / LMG 10740 / 183-1w).